A 715-amino-acid polypeptide reads, in one-letter code: Scinderin (715 aa).

The tract at residues 1-363 (MAQGLYHEEF…DGFGKVYVTE (363 aa)) is actin-severing. Residues 27–77 (LELVPVPESAYGNFYVGDAYLVLHTTQASRGFTYRLHFWLGKECTQDESTA) form a Gelsolin-like 1 repeat. Tyr102 carries the post-translational modification Phosphotyrosine. Residues 112-119 (KGGLKYKA) and 138-146 (RLLHVKGRR) each bind a 1,2-diacyl-sn-glycero-3-phospho-(1D-myo-inositol-4,5-bisphosphate). 4 Gelsolin-like repeats span residues 148 to 188 (VRAT…YERL), 265 to 307 (LVAE…QERK), 398 to 451 (VQIW…DELT), and 523 to 564 (TRIM…EEEK). An actin-binding, Ca-sensitive region spans residues 364–715 (KVAHVKQIPF…WFLGWDSSRW (352 aa)). The ca(2+)-dependent actin binding stretch occupies residues 364 to 715 (KVAHVKQIPF…WFLGWDSSRW (352 aa)). 3 residues coordinate Ca(2+): Asn538, Asp539, and Glu562. Tyr599 is subject to Phosphotyrosine. A Gelsolin-like 6 repeat occupies 626–668 (FIIEEVPGEFTQDDLAEDDVMLLDAWEQIFIWIGKDANEVEKS). 3 residues coordinate Ca(2+): Asp643, Asp644, and Glu666.

The protein belongs to the villin/gelsolin family. The N-terminus is blocked. In terms of tissue distribution, in the adrenal gland, expressed in the medulla but, in the cortex, found only in diffuse parts.

It is found in the cytoplasm. The protein localises to the cytoskeleton. Its subcellular location is the cell projection. The protein resides in the podosome. Ca(2+)-dependent actin filament-severing protein that has a regulatory function in exocytosis by affecting the organization of the microfilament network underneath the plasma membrane. In vitro, also has barbed end capping and nucleating activities in the presence of Ca(2+). Severing activity is inhibited by phosphatidylinositol 4,5-bis-phosphate (PIP2). Required for megakaryocyte differentiation, maturation, polyploidization and apoptosis with the release of platelet-like particles. Plays a role in osteoclastogenesis (OCG) and actin cytoskeletal organization in osteoclasts. Regulates chondrocyte proliferation and differentiation. Inhibits cell proliferation and tumorigenesis. Signaling is mediated by MAPK, p38 and JNK pathways. The polypeptide is Scinderin (Bos taurus (Bovine)).